The sequence spans 484 residues: MTSLFFFVLLFSSLLISNGDANPNYKEALSKSLLFFQGQRSGPLPRGQQISWRASSGLSDGSAAHVDLTGGYYDAGDNVKFNLPMAFTTTMLSWSALEYGKRMGPELENARVNIRWATDYLLKCARATPGKLYVGVGDPNVDHKCWERPEDMDTPRTVYSVSASNPGSDVAAETAAALAAASMVFRKVDSKYSRLLLATAKDVMQFAIQYQGAYSDSLSSSVCPFYCSYSGYKDELMWGASWLLRATNNPYYANFIKSLGGGDQPDIFSWDNKYAGAYVLLSRRALLNKDSNFEQYKQAAENFICKILPDSPSSSTQYTQGGLMYKLPQSNLQYVTSITFLLTTYAKYMKATKHTFNCGSSVIVPNALISLSKRQVDYILGDNPIKMSYMVGFSSNFPKRIHHRASSLPSHALRSQSLGCNGGFQSFYTQNPNPNILTGAIVGGPNQNDGYPDQRDDYSHAEPATYINAAFVGPLAYFAAGRST.

Residues 1–21 form the signal peptide; that stretch reads MTSLFFFVLLFSSLLISNGDA. Asp77 functions as the Nucleophile in the catalytic mechanism. Active-site residues include His402, Asp453, and Glu462.

Belongs to the glycosyl hydrolase 9 (cellulase E) family. In terms of tissue distribution, specifically expressed in root cap cells.

Its subcellular location is the secreted. It localises to the cell wall. It carries out the reaction Endohydrolysis of (1-&gt;4)-beta-D-glucosidic linkages in cellulose, lichenin and cereal beta-D-glucans.. The protein is Endoglucanase 9 (CEL3) of Arabidopsis thaliana (Mouse-ear cress).